Here is a 631-residue protein sequence, read N- to C-terminus: tRNA uridine 5-carboxymethylaminomethyl modification enzyme MnmG (631 aa).

15–20 (GAGHAG) lines the FAD pocket. The disordered stretch occupies residues 214 to 233 (YSKTEEEPGDKEPRHFSFTS). 276-290 (GPRYCPSIETKVVRF) lines the NAD(+) pocket.

Belongs to the MnmG family. Homodimer. Heterotetramer of two MnmE and two MnmG subunits. The cofactor is FAD.

The protein localises to the cytoplasm. In terms of biological role, NAD-binding protein involved in the addition of a carboxymethylaminomethyl (cmnm) group at the wobble position (U34) of certain tRNAs, forming tRNA-cmnm(5)s(2)U34. This chain is tRNA uridine 5-carboxymethylaminomethyl modification enzyme MnmG, found in Lactobacillus delbrueckii subsp. bulgaricus (strain ATCC BAA-365 / Lb-18).